The chain runs to 276 residues: Polyamine aminopropyltransferase (276 aa).

The region spanning 3–236 is the PABS domain; that stretch reads ELWYTEKQTK…GLWTFTIGSK (234 aa). Residue Q32 participates in S-methyl-5'-thioadenosine binding. The spermidine site is built by H63 and D87. S-methyl-5'-thioadenosine contacts are provided by residues D107 and 138-139; that span reads DG. D156 serves as the catalytic Proton acceptor. Position 156–159 (156–159) interacts with spermidine; the sequence is DSTE. P163 provides a ligand contact to S-methyl-5'-thioadenosine.

This sequence belongs to the spermidine/spermine synthase family. As to quaternary structure, homodimer or homotetramer.

The protein resides in the cytoplasm. The catalysed reaction is S-adenosyl 3-(methylsulfanyl)propylamine + putrescine = S-methyl-5'-thioadenosine + spermidine + H(+). The protein operates within amine and polyamine biosynthesis; spermidine biosynthesis; spermidine from putrescine: step 1/1. In terms of biological role, involved in the cell growth and proliferation. Catalyzes the irreversible transfer of a propylamine group from the amino donor S-adenosylmethioninamine (decarboxy-AdoMet) to putrescine (1,4-diaminobutane) to yield spermidine. This chain is Polyamine aminopropyltransferase, found in Bacillus subtilis (strain 168).